The primary structure comprises 113 residues: Beta-microseminoprotein (113 aa).

A signal peptide spans 1-20; the sequence is MKARLGSLLVLATLVTASNA. 5 cysteine pairs are disulfide-bonded: C22-C69, C38-C61, C56-C92, C59-C68, and C83-C106.

Belongs to the beta-microseminoprotein family. Homodimer; Interacts with PI16.

The protein localises to the secreted. This is Beta-microseminoprotein (Msmb) from Rattus norvegicus (Rat).